The chain runs to 420 residues: Nucleobindin-2 (420 aa).

The first 24 residues, 1 to 24 (MRWRIIQVQYCFLLVPCMLTALEA), serve as a signal peptide directing secretion. Residues 171 to 223 (RTRHEEFKKYEMMKEHERREYLKTLSEEKRKEEESKFEEMKRKHEDHPKVNHP) mediate DNA binding. Positions 193–225 (KTLSEEKRKEEESKFEEMKRKHEDHPKVNHPGS) are disordered. Residues 213-420 (KHEDHPKVNH…AGELKFEPHT (208 aa)) form a binds to necdin region. EF-hand domains follow at residues 241 to 276 (PNDF…ELEK) and 293 to 328 (ERLR…KEFL). Residues aspartate 254, asparagine 256, aspartate 258, glutamate 265, aspartate 306, asparagine 308, aspartate 310, and glutamate 317 each contribute to the Ca(2+) site. The GBA signature appears at 304-334 (EIDNNKDRLVTLEEFLRATEKKEFLEPDSWE). Serine 332 bears the Phosphoserine mark. Residues 365 to 389 (AEELQKQKEDLQRQHDHLEAQKQEY) are compositionally biased toward basic and acidic residues. A disordered region spans residues 365 to 420 (AEELQKQKEDLQRQHDHLEAQKQEYHQAVQHLEQKKLQQGIAPSGPAGELKFEPHT).

The protein belongs to the nucleobindin family. Interacts (via GBA motif) with guanine nucleotide-binding protein G(i) alpha subunit GNAI3. Preferentially interacts with inactive rather than active GNAI3. Interaction with GNAI3 is inhibited when NUCB2 binds calcium, probably due to a conformational change which renders the GBA motif inaccessible. Binds to the postmitotic growth suppressor NDN; coexpression abolishes NUCB2 secretion. Interacts with MC4R. As to expression, found in liver, heart, thymus, muscle, intestine, kidney, lung, spleen and throughout the brain, in cerebral cortex, hippocampus, hypothalamus and medulla oblongata. Nucb2 and necdin levels were higher in postmitotic neurons.

The protein localises to the cytoplasm. The protein resides in the perikaryon. It is found in the endoplasmic reticulum. It localises to the golgi apparatus. Its subcellular location is the nucleus envelope. The protein localises to the membrane. The protein resides in the secreted. Calcium-binding protein which may have a role in calcium homeostasis. Acts as a non-receptor guanine nucleotide exchange factor which binds to and activates guanine nucleotide-binding protein (G-protein) alpha subunit GNAI3. Its function is as follows. Anorexigenic peptide, seems to play an important role in hypothalamic pathways regulating food intake and energy homeostasis, acting in a leptin-independent manner. May also exert hypertensive roles and modulate blood pressure through directly acting on peripheral arterial resistance. In intestinal epithelial cells, plays a role in the inhibition of hepatic glucose production via MC4R receptor leading to increased cyclic adenosine monophosphate (cAMP) levels and glucagon-like peptide 1 (GLP-1) secretion. The sequence is that of Nucleobindin-2 (Nucb2) from Mus musculus (Mouse).